A 1794-amino-acid chain; its full sequence is Non-reducing polyketide synthase nscA (1794 aa).

The tract at residues 19–256 (DLKDLFRRLH…PLPVYDGLCH (238 aa)) is N-terminal acylcarrier protein transacylase domain (SAT). Residues 389-822 (ASKLAIVGMA…GGNTTVLLED (434 aa)) enclose the Ketosynthase family 3 (KS3) domain. A compositionally biased stretch (basic and acidic residues) spans 428-440 (DRFDLNTHYDPTG). The segment at 428-448 (DRFDLNTHYDPTGKTENATQT) is disordered. Residues C562, H697, and H740 each act as for beta-ketoacyl synthase activity in the active site. The tract at residues 927–1230 (TFTGQGAYYS…SVISSCRRNE (304 aa)) is malonyl-CoA:ACP transacylase (MAT) domain. A product template (PT) domain region spans residues 1314 to 1633 (TSLVHQITTE…RLLMDRFFSP (320 aa)). An N-terminal hotdog fold region spans residues 1318–1454 (HQITTETVEA…CVVRFEDPAA (137 aa)). Residues 1318–1628 (HQITTETVEA…FRRVPRLLMD (311 aa)) form the PKS/mFAS DH domain. H1350 (proton acceptor; for dehydratase activity) is an active-site residue. The C-terminal hotdog fold stretch occupies residues 1482–1628 (ASKLSKPLAY…FRRVPRLLMD (147 aa)). D1539 functions as the Proton donor; for dehydratase activity in the catalytic mechanism. The interval 1637–1719 (SHTEKQLQET…ATSDRGDSTD (83 aa)) is disordered. The segment covering 1644-1655 (QETAPSATNVKK) has biased composition (polar residues). Residues 1717-1794 (STDAGVVGQC…EMTAWLEEYC (78 aa)) enclose the Carrier domain. S1754 bears the O-(pantetheine 4'-phosphoryl)serine mark.

The cofactor is pantetheine 4'-phosphate.

It participates in secondary metabolite biosynthesis. In terms of biological role, non-reducing polyketide synthase; part of the gene cluster that mediates the biosynthesis of neosartoricin, a prenylated anthracenone that exhibits T-cell antiproliferative activity, suggestive of a physiological role as an immunosuppressive agent. The non-reducing polyketide synthase nscA probably synthesizes and cyclizes the decaketide backbone. The hydrolase nscB then mediates the product release through hydrolysis followed by spontaneous decarboxylation. The prenyltransferase nscD catalyzes the addition of the dimethylallyl group to the aromatic C5. The FAD-dependent monooxygenase nscC is then responsible for the stereospecific hydroxylation at C2. There is no gene encoding O-acetyltransferase in the nsc gene cluster; thus, the last step of 2-O-acetylation leading to neosartoricin may be catalyzed by an unidentified O-acetyltransferase. This chain is Non-reducing polyketide synthase nscA, found in Aspergillus fumigatus (strain ATCC MYA-4609 / CBS 101355 / FGSC A1100 / Af293) (Neosartorya fumigata).